Consider the following 812-residue polypeptide: 1,4-alpha-glucan branching enzyme GlgB (812 aa).

A compositionally biased stretch (polar residues) spans 1–11 (MNNGDVNNGTA). Positions 1–83 (MNNGDVNNGT…SALPADPPAV (83 aa)) are disordered. Over residues 49–64 (SSASAQPGQTADDPAV) the composition is skewed to low complexity. A compositionally biased stretch (pro residues) spans 65-83 (PSAPPSAPPSALPADPPAV). Asp-490 (nucleophile) is an active-site residue. The Proton donor role is filled by Glu-543.

It belongs to the glycosyl hydrolase 13 family. GlgB subfamily. As to quaternary structure, monomer.

It catalyses the reaction Transfers a segment of a (1-&gt;4)-alpha-D-glucan chain to a primary hydroxy group in a similar glucan chain.. The protein operates within glycan biosynthesis; glycogen biosynthesis. In terms of biological role, catalyzes the formation of the alpha-1,6-glucosidic linkages in glycogen by scission of a 1,4-alpha-linked oligosaccharide from growing alpha-1,4-glucan chains and the subsequent attachment of the oligosaccharide to the alpha-1,6 position. The chain is 1,4-alpha-glucan branching enzyme GlgB from Frankia casuarinae (strain DSM 45818 / CECT 9043 / HFP020203 / CcI3).